Here is a 654-residue protein sequence, read N- to C-terminus: Endoplasmic reticulum chaperone BiP (654 aa).

Residues Met1–Ala18 form the signal peptide. A required for interaction with ELAPOR1 region spans residues Met1 to Ala80. Gly36 to Tyr39 contacts ATP. Ser86 is modified (phosphoserine). Residue Lys96 coordinates ATP. An N6-acetyllysine modification is found at Lys125. Residues Lys125 to Lys280 form a nucleotide-binding (NBD) region. Tyr160 carries the post-translational modification 3'-nitrotyrosine. Position 213 is an N6-acetyllysine (Lys213). Gly227–Thr229 contacts ATP. Lys271 carries the N6-acetyllysine modification. An ATP-binding site is contributed by Glu293–Ser300. Position 326 is an N6-acetyllysine (Lys326). Residue Lys352 forms a Glycyl lysine isopeptide (Lys-Gly) (interchain with G-Cter in SUMO2) linkage. Lys353 bears the N6-acetyllysine; alternate mark. A Glycyl lysine isopeptide (Lys-Gly) (interchain with G-Cter in SUMO1); alternate cross-link involves residue Lys353. An ATP-binding site is contributed by Gly364–Arg367. The tract at residues Gln409–Val419 is interdomain linker. Residues Cys420 to Thr500 are substrate-binding (SBD). An N6-succinyllysine modification is found at Lys447. At Arg492 the chain carries Omega-N-methylarginine. The residue at position 518 (Thr518) is an O-AMP-threonine; alternate. At Thr518 the chain carries Phosphothreonine; alternate. An N6,N6,N6-trimethyllysine; by METTL21A; in vitro modification is found at Lys585. N6,N6-dimethyllysine; alternate is present on Lys585. At Lys585 the chain carries N6-methyllysine; alternate. N6-methyllysine is present on Lys591. The disordered stretch occupies residues Ser632 to Leu654. Phosphothreonine is present on residues Thr643 and Thr648. The segment covering Gly644 to Leu654 has biased composition (acidic residues). Ser649 is subject to Phosphoserine. The short motif at Lys651 to Leu654 is the Prevents secretion from ER element.

The protein belongs to the heat shock protein 70 family. Monomer and homooligomer; homooligomerization via the interdomain linker inactivates the chaperone activity and acts as a storage of HSPA5/BiP molecules. Interacts with DNAJC1 (via J domain). Component of an EIF2 complex at least composed of CELF1/CUGBP1, CALR, CALR3, EIF2S1, EIF2S2, HSP90B1 and HSPA5. Part of a large chaperone multiprotein complex comprising DNAJB11, HSP90B1, HSPA5, HYOU, PDIA2, PDIA4, PDIA6, PPIB, SDF2L1, UGGT1 and very small amounts of ERP29, but not, or at very low levels, CALR nor CANX. Interacts with TMEM132A and TRIM21. May form a complex with ERLEC1, OS9, SEL1L and SYVN1. Interacts with DNAJC10. Interacts with DNAJB9/ERdj4; leading to recruit HSPA5/BiP to ERN1/IRE1. Interacts with ERN1/IRE1 (via luminal domain); the interaction takes place following interaction with DNAJB9/ERdj4 and leads to inactivate ERN1/IRE1, the interaction also competitively inhibits ERN1 interaction with MANF. Interacts directly with MANF (via SAP domain); the interaction inhibits ATP binding to HSPA5/BiP and subsequent nucleotide exchange. Interacts with EIF2AK3/PERK (via luminal domain); interaction leads to inactivate EIF2AK3/PERK. Interacts with MX1. Interacts with METTL23. Interacts with CEMIP; the interaction induces calcium leakage from the endoplasmic reticulum and cell migration. Interacts with PCSK4 form; the interaction takes place in the endoplasmic reticulum. Interacts with CIPC. Interacts with CCDC88B (via C-terminus); the interaction opposes ERN1-mediated JNK activation, protecting against apoptosis. Interacts with INPP5K; necessary for INPP5K localization at the endoplasmic reticulum. Interacts with LOXL2; leading to activate the ERN1/IRE1-XBP1 pathway of the unfolded protein response. Interacts with CLU under stressed condition; interaction increases CLU protein stability; facilitates its retrotranslocation and redistribution to the mitochondria; cooperatively suppress stress-induced apoptosis by stabilizing mitochondrial membrane integrity. Interacts with CCDC47. Interacts with CLN3. Interacts with ELAPOR1; may regulate the function of HSPA5 in apoptosis and cell proliferation. Interacts with CASP7. Interacts with ILDR2; the interaction stabilizes ILDR2 expression. Interacts with ADAM7. In unstressed cells, AMPylation at Thr-518 by FICD inactivates the chaperome activity: AMPylated form is locked in a relatively inert state and only weakly stimulated by J domain-containing proteins. In response to endoplasmic reticulum stress, de-AMPylation by the same protein, FICD, restores the chaperone activity.

The protein resides in the endoplasmic reticulum lumen. It localises to the melanosome. The protein localises to the cytoplasm. It is found in the cell surface. The catalysed reaction is ATP + H2O = ADP + phosphate + H(+). Its activity is regulated as follows. The chaperone activity is regulated by ATP-induced allosteric coupling of the nucleotide-binding (NBD) and substrate-binding (SBD) domains. In the ADP-bound and nucleotide-free (apo) states, the two domains have little interaction. In contrast, in the ATP-bound state the two domains are tightly coupled, which results in drastically accelerated kinetics in both binding and release of polypeptide substrates. J domain-containing co-chaperones (DNAJB9/ERdj4 or DNAJC10/ERdj5) stimulate the ATPase activity and are required for efficient substrate recognition by HSPA5/BiP. Homooligomerization inactivates participating HSPA5/BiP protomers and probably act as reservoirs to store HSPA5/BiP molecules when they are not needed by the cell. Functionally, endoplasmic reticulum chaperone that plays a key role in protein folding and quality control in the endoplasmic reticulum lumen. Involved in the correct folding of proteins and degradation of misfolded proteins via its interaction with DNAJC10/ERdj5, probably to facilitate the release of DNAJC10/ERdj5 from its substrate. Acts as a key repressor of the EIF2AK3/PERK and ERN1/IRE1-mediated unfolded protein response (UPR). In the unstressed endoplasmic reticulum, recruited by DNAJB9/ERdj4 to the luminal region of ERN1/IRE1, leading to disrupt the dimerization of ERN1/IRE1, thereby inactivating ERN1/IRE1. Also binds and inactivates EIF2AK3/PERK in unstressed cells. Accumulation of misfolded protein in the endoplasmic reticulum causes release of HSPA5/BiP from ERN1/IRE1 and EIF2AK3/PERK, allowing their homodimerization and subsequent activation. Plays an auxiliary role in post-translational transport of small presecretory proteins across endoplasmic reticulum (ER). May function as an allosteric modulator for SEC61 channel-forming translocon complex, likely cooperating with SEC62 to enable the productive insertion of these precursors into SEC61 channel. Appears to specifically regulate translocation of precursors having inhibitory residues in their mature region that weaken channel gating. May also play a role in apoptosis and cell proliferation. This Cricetulus griseus (Chinese hamster) protein is Endoplasmic reticulum chaperone BiP.